Reading from the N-terminus, the 510-residue chain is MVTIRADEISKIIRERIEQYNTEIKIVNTGTVLQVGDGIARIYGLDEVMAGELVEFEEGTIGIALNLESKNVGVVLMGDGLMIQEGSSVKATGRIAQIPVSEGYLGRVINALAKPIDGRGEISSSESRLIESPAPGIISRRSVYEPLQTGLIAIDSMIPIGRGQRELIIGDRQTGKTAVATDTILNQQGQNVICVYVAVGQKASSVAQVVNTLQERGAMEYTIVVAETADSPATLQYLAPYTGAALAEFFMYRERHTLIIYDDLSKQAQAYRQMSLLLRRPPGREAYPGDVFYLHSRLLERAAKLSSQLGEGSMTALPIVETQSGDVSAYIPTNVISITDGQIFLSADLFNAGIRPAINVGISVSRVGSAAQIKAMKQVAGKLKLELAQFAELEAFAQFASDLDKATQNQLARGQRLRELLKQSQSAPLTVEEQVITIYTGTNGYLDSLEIRQVRKFLVELRAYLKTNKPQFNEIISSTKTFTGEAEALLKEAIQEQMELFLLQEQVEKN.

Residue glycine 170–threonine 177 participates in ATP binding.

This sequence belongs to the ATPase alpha/beta chains family. F-type ATPases have 2 components, CF(1) - the catalytic core - and CF(0) - the membrane proton channel. CF(1) has five subunits: alpha(3), beta(3), gamma(1), delta(1), epsilon(1). CF(0) has four main subunits: a, b, b' and c.

The protein resides in the plastid. Its subcellular location is the chloroplast thylakoid membrane. It carries out the reaction ATP + H2O + 4 H(+)(in) = ADP + phosphate + 5 H(+)(out). Its function is as follows. Produces ATP from ADP in the presence of a proton gradient across the membrane. The alpha chain is a regulatory subunit. The sequence is that of ATP synthase subunit alpha, chloroplastic from Lotus japonicus (Lotus corniculatus var. japonicus).